A 351-amino-acid chain; its full sequence is Quinolinate phosphoribosyltransferase [decarboxylating] 2b, mitochondrial (351 aa).

Residues R142, T173 to K175, R197, K207, E240, D267, S299 to N301, and S320 to A322 contribute to the substrate site.

This sequence belongs to the NadC/ModD family. As to expression, expressed in roots and flowers.

Its subcellular location is the mitochondrion. It carries out the reaction nicotinate beta-D-ribonucleotide + CO2 + diphosphate = quinolinate + 5-phospho-alpha-D-ribose 1-diphosphate + 2 H(+). It functions in the pathway alkaloid biosynthesis; nicotine biosynthesis. The protein operates within cofactor biosynthesis; NAD(+) biosynthesis; nicotinate D-ribonucleotide from quinolinate: step 1/1. Involved in the biosynthesis of pyridine alkaloid natural products, leading mainly to the production of anabasine, anatabine, nicotine and nornicotine, effective deterrents against herbivores with antiparasitic and pesticide properties (neurotoxins); nornicotine serves as the precursor in the synthesis of the carcinogen compound N'-nitrosonornicotine (NNN). Involved in the catabolism of quinolinic acid (QA). This is Quinolinate phosphoribosyltransferase [decarboxylating] 2b, mitochondrial from Nicotiana tabacum (Common tobacco).